The sequence spans 202 residues: UPF0126 membrane protein YvgT (202 aa).

Transmembrane regions (helical) follow at residues 3-23 (WELL…IVAM), 26-46 (EYDI…GGAI), 63-83 (AYFQ…KLLL), 90-110 (GNLS…LYAV), 113-133 (GHPL…GGII), and 160-180 (IVGL…FVLV).

It belongs to the UPF0126 family.

It localises to the cell membrane. The protein is UPF0126 membrane protein YvgT (yvgT) of Bacillus subtilis (strain 168).